The primary structure comprises 221 residues: Probable GTP-binding protein EngB (221 aa).

Positions 32 to 205 (GIPQIAFAGR…RKIVDSLITT (174 aa)) constitute an EngB-type G domain. Residues 40–47 (GRSNAGKS), 67–71 (GKTKL), 85–88 (DLPG), 152–155 (TKID), and 184–186 (VSN) each bind GTP. Positions 47 and 69 each coordinate Mg(2+).

This sequence belongs to the TRAFAC class TrmE-Era-EngA-EngB-Septin-like GTPase superfamily. EngB GTPase family. Mg(2+) serves as cofactor.

Functionally, necessary for normal cell division and for the maintenance of normal septation. This chain is Probable GTP-binding protein EngB, found in Leptospira borgpetersenii serovar Hardjo-bovis (strain JB197).